The sequence spans 491 residues: Endoglucanase 14 (491 aa).

A signal peptide spans 1–31 (MSQLKIGSSQCLWTSICIVLFVLSMARGAVS). Catalysis depends on aspartate 86, which acts as the Nucleophile. An N-linked (GlcNAc...) asparagine glycan is attached at asparagine 397. Active-site residues include histidine 413, aspartate 465, and glutamate 474.

It belongs to the glycosyl hydrolase 9 (cellulase E) family.

It localises to the secreted. It catalyses the reaction Endohydrolysis of (1-&gt;4)-beta-D-glucosidic linkages in cellulose, lichenin and cereal beta-D-glucans.. This is Endoglucanase 14 from Arabidopsis thaliana (Mouse-ear cress).